A 62-amino-acid chain; its full sequence is DNA-directed RNA polymerase subunit Rpo10 (62 aa).

Zn(2+) contacts are provided by C6, C9, C43, and C44.

This sequence belongs to the archaeal Rpo10/eukaryotic RPB10 RNA polymerase subunit family. As to quaternary structure, part of the RNA polymerase complex. It depends on Zn(2+) as a cofactor.

It localises to the cytoplasm. It carries out the reaction RNA(n) + a ribonucleoside 5'-triphosphate = RNA(n+1) + diphosphate. DNA-dependent RNA polymerase (RNAP) catalyzes the transcription of DNA into RNA using the four ribonucleoside triphosphates as substrates. This is DNA-directed RNA polymerase subunit Rpo10 from Methanospirillum hungatei JF-1 (strain ATCC 27890 / DSM 864 / NBRC 100397 / JF-1).